Consider the following 447-residue polypeptide: Probable alpha-galactosidase B (447 aa).

Positions 1 to 25 are cleaved as a signal peptide; that stretch reads MTTFFSLTTAAAVLTLARGSNALVR. 2 cysteine pairs are disulfide-bonded: C45/C77 and C127/C157. Residue D155 is the Nucleophile of the active site. N-linked (GlcNAc...) asparagine glycans are attached at residues N162 and N180. 225–229 contacts substrate; that stretch reads EWGQA. N-linked (GlcNAc...) asparagine glycosylation is present at N236. Catalysis depends on D247, which acts as the Proton donor. Residue N286 is glycosylated (N-linked (GlcNAc...) asparagine).

The protein belongs to the glycosyl hydrolase 27 family.

The protein resides in the secreted. It carries out the reaction Hydrolysis of terminal, non-reducing alpha-D-galactose residues in alpha-D-galactosides, including galactose oligosaccharides, galactomannans and galactolipids.. In terms of biological role, hydrolyzes a variety of simple alpha-D-galactoside as well as more complex molecules such as oligosaccharides and polysaccharides. The protein is Probable alpha-galactosidase B (aglB) of Aspergillus fumigatus (strain ATCC MYA-4609 / CBS 101355 / FGSC A1100 / Af293) (Neosartorya fumigata).